The sequence spans 160 residues: uncharacterized protein (160 aa).

Residues 1–25 form the signal peptide; it reads MKVTLLLLLIAVLLLLLIFMKVCKQ.

This is an uncharacterized protein from Invertebrate iridescent virus 6 (IIV-6).